A 522-amino-acid polypeptide reads, in one-letter code: Perilipin-1 (522 aa).

The residue at position 81 (S81) is a Phosphoserine. T85 is subject to Phosphothreonine. A phosphoserine mark is found at S126, S130, S132, S137, and S174. Disordered regions lie at residues 195–217 (DKEESAPAPGHQQAQKSPKAKPS) and 287–318 (LAAAQEEDHEDQTDTEGEDTEEEEELETEENK). Acidic residues predominate over residues 291–314 (QEEDHEDQTDTEGEDTEEEEELET). The required for interaction with CIDEC stretch occupies residues 291–319 (QEEDHEDQTDTEGEDTEEEEELETEENKF). Residues T299 and T301 each carry the phosphothreonine modification. A phosphoserine mark is found at S382, S384, and S408. Positions 413 to 522 (ESEFRDIDNP…THYSQLRKKS (110 aa)) are disordered. A compositionally biased stretch (basic and acidic residues) spans 414–435 (SEFRDIDNPPAEVERREAERRA). 3 positions are modified to phosphoserine: S436, S497, and S499.

Belongs to the perilipin family. In terms of assembly, interacts with ABHD5. Interacts with CIDEC. Interacts with AQP7. Major cAMP-dependent protein kinase-substrate in adipocytes, also dephosphorylated by PP1. When phosphorylated, may be maximally sensitive to HSL and when unphosphorylated, may play a role in the inhibition of lipolysis, by acting as a barrier in lipid droplet. Detected in adipocytes from white adipose tissue (at protein level). Detected in visceral adipose tissue and mammary gland.

It is found in the endoplasmic reticulum. The protein localises to the lipid droplet. In terms of biological role, modulator of adipocyte lipid metabolism. Coats lipid storage droplets to protect them from breakdown by hormone-sensitive lipase (HSL). Its absence may result in leanness. Plays a role in unilocular lipid droplet formation by activating CIDEC. Their interaction promotes lipid droplet enlargement and directional net neutral lipid transfer. May modulate lipolysis and triglyceride levels. The chain is Perilipin-1 (PLIN1) from Homo sapiens (Human).